A 389-amino-acid polypeptide reads, in one-letter code: Ribonucleoside-diphosphate reductase subunit M2 (389 aa).

Ser-20 is subject to Phosphoserine. Thr-33 carries the phosphothreonine modification. A Cy motif is present at residues 49-51; sequence RRI. Residues Asp-138, Glu-169, and His-172 each coordinate Fe cation. Residue Tyr-176 is part of the active site. Fe cation contacts are provided by Glu-232, Glu-266, and His-269.

It belongs to the ribonucleoside diphosphate reductase small chain family. As to quaternary structure, heterodimer of a large and a small subunit. Interacts (via Cy motif and when phosphorylated at Thr-33) with CCNF; the interaction occurs exclusively in G2 and early M. Fe cation is required as a cofactor. In terms of processing, phosphorylation on Ser-20 relieves the inhibitory effect on Wnt signaling. Phosphorylated on Thr-33 by CDK1 and CDK2; predominantly in G2 and M phase. Ubiquitinated by the SCF(CCNF) E3 ubiquitin-protein ligase complex; leading to its degradation by the proteasome.

It is found in the cytoplasm. The protein resides in the nucleus. The catalysed reaction is a 2'-deoxyribonucleoside 5'-diphosphate + [thioredoxin]-disulfide + H2O = a ribonucleoside 5'-diphosphate + [thioredoxin]-dithiol. Functionally, provides the precursors necessary for DNA synthesis. Catalyzes the biosynthesis of deoxyribonucleotides from the corresponding ribonucleotides. Inhibits Wnt signaling. This Homo sapiens (Human) protein is Ribonucleoside-diphosphate reductase subunit M2 (RRM2).